We begin with the raw amino-acid sequence, 246 residues long: UPF0736 protein GWCH70_0753 (246 aa).

This sequence belongs to the UPF0736 family.

In Geobacillus sp. (strain WCH70), this protein is UPF0736 protein GWCH70_0753.